The following is an 802-amino-acid chain: Acetyl-CoA decarbonylase/synthase complex subunit alpha (802 aa).

Positions 69, 72, 73, 75, 80, and 90 each coordinate [4Fe-4S] cluster. A CO-binding site is contributed by His113. 3 residues coordinate [Ni-4Fe-4S] cluster: His246, Cys274, and Cys319. 2 consecutive 4Fe-4S ferredoxin-type domains span residues 404 to 432 (EELKELADSCVHCLKCEVACPNSLPISEA) and 442 to 473 (SKFELLHDKCIACGRCEYACPKDIDIVNVIEK). The [4Fe-4S] cluster site is built by Cys413, Cys416, Cys419, Cys423, Cys451, Cys454, Cys457, and Cys461. [Ni-4Fe-4S] cluster contacts are provided by Cys519, Cys548, and Cys583.

Belongs to the Ni-containing carbon monoxide dehydrogenase family. In terms of assembly, heterotetramer of two alpha and two epsilon subunits. The ACDS complex is made up of alpha, epsilon, beta, gamma and delta subunits with a probable stoichiometry of (alpha(2)epsilon(2))(4)-beta(8)-(gamma(1)delta(1))(8). [4Fe-4S] cluster is required as a cofactor. The cofactor is [Ni-4Fe-4S] cluster.

The catalysed reaction is CO + 2 oxidized [2Fe-2S]-[ferredoxin] + H2O = 2 reduced [2Fe-2S]-[ferredoxin] + CO2 + 2 H(+). Its pathway is one-carbon metabolism; methanogenesis from acetate. Functionally, part of the ACDS complex that catalyzes the reversible cleavage of acetyl-CoA, allowing growth on acetate as sole source of carbon and energy. The alpha-epsilon subcomponent functions as a carbon monoxide dehydrogenase. The chain is Acetyl-CoA decarbonylase/synthase complex subunit alpha from Methanococcoides burtonii (strain DSM 6242 / NBRC 107633 / OCM 468 / ACE-M).